We begin with the raw amino-acid sequence, 366 residues long: tRNA-specific 2-thiouridylase MnmA (366 aa).

ATP-binding positions include 6-13 and Met32; that span reads GLSGGVDS. Cys96 acts as the Nucleophile in catalysis. Residues Cys96 and Cys196 are joined by a disulfide bond. Gly120 contacts ATP. Residues 146 to 148 are interaction with tRNA; that stretch reads KDQ. The active-site Cysteine persulfide intermediate is the Cys196. Residues 302–303 are interaction with tRNA; that stretch reads RY.

It belongs to the MnmA/TRMU family.

The protein localises to the cytoplasm. It carries out the reaction S-sulfanyl-L-cysteinyl-[protein] + uridine(34) in tRNA + AH2 + ATP = 2-thiouridine(34) in tRNA + L-cysteinyl-[protein] + A + AMP + diphosphate + H(+). In terms of biological role, catalyzes the 2-thiolation of uridine at the wobble position (U34) of tRNA, leading to the formation of s(2)U34. This Treponema denticola (strain ATCC 35405 / DSM 14222 / CIP 103919 / JCM 8153 / KCTC 15104) protein is tRNA-specific 2-thiouridylase MnmA.